The primary structure comprises 165 residues: Fimbrial protein (165 aa).

A signal peptide spans 1–21 (MRKSASAVAVLALIACGSAHA).

It is found in the fimbrium. Functionally, structural subunit of the sef14 fimbriae. This chain is Fimbrial protein (sefA), found in Salmonella enteritidis.